The primary structure comprises 330 residues: Tetraacyldisaccharide 4'-kinase (330 aa).

58-65 (TVGGSGKT) provides a ligand contact to ATP.

This sequence belongs to the LpxK family.

It catalyses the reaction a lipid A disaccharide + ATP = a lipid IVA + ADP + H(+). The protein operates within glycolipid biosynthesis; lipid IV(A) biosynthesis; lipid IV(A) from (3R)-3-hydroxytetradecanoyl-[acyl-carrier-protein] and UDP-N-acetyl-alpha-D-glucosamine: step 6/6. Its function is as follows. Transfers the gamma-phosphate of ATP to the 4'-position of a tetraacyldisaccharide 1-phosphate intermediate (termed DS-1-P) to form tetraacyldisaccharide 1,4'-bis-phosphate (lipid IVA). The protein is Tetraacyldisaccharide 4'-kinase of Shewanella pealeana (strain ATCC 700345 / ANG-SQ1).